We begin with the raw amino-acid sequence, 210 residues long: Orotate phosphoribosyltransferase (210 aa).

Residues Arg96, Lys100, His102, and 122–130 (DDLISTGGS) each bind 5-phospho-alpha-D-ribose 1-diphosphate. Ser126 serves as a coordination point for orotate.

This sequence belongs to the purine/pyrimidine phosphoribosyltransferase family. PyrE subfamily. Homodimer. Mg(2+) is required as a cofactor.

The catalysed reaction is orotidine 5'-phosphate + diphosphate = orotate + 5-phospho-alpha-D-ribose 1-diphosphate. It functions in the pathway pyrimidine metabolism; UMP biosynthesis via de novo pathway; UMP from orotate: step 1/2. Catalyzes the transfer of a ribosyl phosphate group from 5-phosphoribose 1-diphosphate to orotate, leading to the formation of orotidine monophosphate (OMP). The chain is Orotate phosphoribosyltransferase from Levilactobacillus brevis (strain ATCC 367 / BCRC 12310 / CIP 105137 / JCM 1170 / LMG 11437 / NCIMB 947 / NCTC 947) (Lactobacillus brevis).